We begin with the raw amino-acid sequence, 20 residues long: Venom peptide Ocy8 (20 aa).

Expressed by the venom gland.

The protein localises to the secreted. This chain is Venom peptide Ocy8, found in Opisthacanthus cayaporum (South American scorpion).